The primary structure comprises 263 residues: Chromosomal replication initiator protein DnaA (263 aa).

Glutamate 1 is a region of interest (domain I, interacts with DnaA modulators). Residue glutamate 1 is a region of interest, domain II. Residues 1 to 179 form a domain III, AAA+ region region; the sequence is ESGMGKTHLL…GSVSRLNFWS (179 aa). Glycine 3, glycine 5, lysine 6, and threonine 7 together coordinate ATP. Residues 180 to 263 are domain IV, binds dsDNA; the sequence is QQNPEEKIIT…HTLAQIGEEF (84 aa).

This sequence belongs to the DnaA family. Oligomerizes as a right-handed, spiral filament on DNA at oriC.

It localises to the cytoplasm. Functionally, plays an essential role in the initiation and regulation of chromosomal replication. ATP-DnaA binds to the origin of replication (oriC) to initiate formation of the DNA replication initiation complex once per cell cycle. Binds the DnaA box (a 9 base pair repeat at the origin) and separates the double-stranded (ds)DNA. Forms a right-handed helical filament on oriC DNA; dsDNA binds to the exterior of the filament while single-stranded (ss)DNA is stabiized in the filament's interior. The ATP-DnaA-oriC complex binds and stabilizes one strand of the AT-rich DNA unwinding element (DUE), permitting loading of DNA polymerase. After initiation quickly degrades to an ADP-DnaA complex that is not apt for DNA replication. Binds acidic phospholipids. The polypeptide is Chromosomal replication initiator protein DnaA (Mycoplasma mycoides).